Consider the following 96-residue polypeptide: Large ribosomal subunit protein eL30 (96 aa).

It belongs to the eukaryotic ribosomal protein eL30 family.

The polypeptide is Large ribosomal subunit protein eL30 (Methanosphaerula palustris (strain ATCC BAA-1556 / DSM 19958 / E1-9c)).